The chain runs to 120 residues: Spermidine export protein MdtJ (120 aa).

4 helical membrane-spanning segments follow: residues 1–21, 31–51, 54–74, and 81–101; these read MFYWILLALAIATEITGTLSM, AGFILMLVMITLSYIFLSFAV, IALGVAYALWEGIGILFITIF, and EALSTMKIAGLLTLVAGIVLI.

This sequence belongs to the drug/metabolite transporter (DMT) superfamily. Small multidrug resistance (SMR) (TC 2.A.7.1) family. MdtJ subfamily. As to quaternary structure, forms a complex with MdtI.

It is found in the cell inner membrane. Functionally, catalyzes the excretion of spermidine. This is Spermidine export protein MdtJ from Salmonella choleraesuis (strain SC-B67).